Here is a 468-residue protein sequence, read N- to C-terminus: 3-isopropylmalate dehydratase large subunit (468 aa).

Positions 349, 409, and 412 each coordinate [4Fe-4S] cluster.

This sequence belongs to the aconitase/IPM isomerase family. LeuC type 1 subfamily. As to quaternary structure, heterodimer of LeuC and LeuD. [4Fe-4S] cluster serves as cofactor.

The enzyme catalyses (2R,3S)-3-isopropylmalate = (2S)-2-isopropylmalate. It participates in amino-acid biosynthesis; L-leucine biosynthesis; L-leucine from 3-methyl-2-oxobutanoate: step 2/4. Its function is as follows. Catalyzes the isomerization between 2-isopropylmalate and 3-isopropylmalate, via the formation of 2-isopropylmaleate. This Shewanella baltica (strain OS223) protein is 3-isopropylmalate dehydratase large subunit.